We begin with the raw amino-acid sequence, 398 residues long: Tryptophan synthase beta chain (398 aa).

Lysine 88 carries the N6-(pyridoxal phosphate)lysine modification.

The protein belongs to the TrpB family. Tetramer of two alpha and two beta chains. The cofactor is pyridoxal 5'-phosphate.

The catalysed reaction is (1S,2R)-1-C-(indol-3-yl)glycerol 3-phosphate + L-serine = D-glyceraldehyde 3-phosphate + L-tryptophan + H2O. The protein operates within amino-acid biosynthesis; L-tryptophan biosynthesis; L-tryptophan from chorismate: step 5/5. The beta subunit is responsible for the synthesis of L-tryptophan from indole and L-serine. This Actinobacillus succinogenes (strain ATCC 55618 / DSM 22257 / CCUG 43843 / 130Z) protein is Tryptophan synthase beta chain.